A 340-amino-acid chain; its full sequence is Ketol-acid reductoisomerase (NADP(+)) (340 aa).

A KARI N-terminal Rossmann domain is found at 3–182 (VQMEYEKDVK…GAARVGLLET (180 aa)). NADP(+) is bound by residues 26 to 29 (YGSQ), Arg49, Ser53, and 83 to 86 (DEIQ). The active site involves His108. Residue Gly134 coordinates NADP(+). A KARI C-terminal knotted domain is found at 183-328 (TYKEETEEDL…AELRKAMPFV (146 aa)). Positions 191, 195, 227, and 231 each coordinate Mg(2+). Ser252 contacts substrate.

The protein belongs to the ketol-acid reductoisomerase family. The cofactor is Mg(2+).

The catalysed reaction is (2R)-2,3-dihydroxy-3-methylbutanoate + NADP(+) = (2S)-2-acetolactate + NADPH + H(+). The enzyme catalyses (2R,3R)-2,3-dihydroxy-3-methylpentanoate + NADP(+) = (S)-2-ethyl-2-hydroxy-3-oxobutanoate + NADPH + H(+). Its pathway is amino-acid biosynthesis; L-isoleucine biosynthesis; L-isoleucine from 2-oxobutanoate: step 2/4. The protein operates within amino-acid biosynthesis; L-valine biosynthesis; L-valine from pyruvate: step 2/4. Involved in the biosynthesis of branched-chain amino acids (BCAA). Catalyzes an alkyl-migration followed by a ketol-acid reduction of (S)-2-acetolactate (S2AL) to yield (R)-2,3-dihydroxy-isovalerate. In the isomerase reaction, S2AL is rearranged via a Mg-dependent methyl migration to produce 3-hydroxy-3-methyl-2-ketobutyrate (HMKB). In the reductase reaction, this 2-ketoacid undergoes a metal-dependent reduction by NADPH to yield (R)-2,3-dihydroxy-isovalerate. In Streptococcus gordonii (strain Challis / ATCC 35105 / BCRC 15272 / CH1 / DL1 / V288), this protein is Ketol-acid reductoisomerase (NADP(+)).